The primary structure comprises 207 residues: Probable GTP-binding protein EngB (207 aa).

Residues Gly24–Leu199 enclose the EngB-type G domain. GTP contacts are provided by residues Gly32–Ser39, Gly59–Gln63, Asp77–Gly80, Thr144–Asp147, and Tyr178–Gly180. Mg(2+) contacts are provided by Ser39 and Thr61.

It belongs to the TRAFAC class TrmE-Era-EngA-EngB-Septin-like GTPase superfamily. EngB GTPase family. Requires Mg(2+) as cofactor.

Its function is as follows. Necessary for normal cell division and for the maintenance of normal septation. The chain is Probable GTP-binding protein EngB from Xanthomonas oryzae pv. oryzae (strain MAFF 311018).